The primary structure comprises 299 residues: Superkiller complex protein 8 (299 aa).

7 WD repeats span residues 11–48 (AHEDGIWCVKWQGDIIATGGMGTKVKTWHGNQPQFLTE), 54–93 (KHILGVTSLDIDIGARYLATGGMDGTVRLFDLSTNTLHKT), 96–135 (SGPLGCLKIGFLNSANNLVSVSESGNISIYSVETGEKLRS), 138–177 (NTNKQVLTMAISPNNEQIAVAGLDGTVLCYDVESGRRVSE), 180–219 (AHGVPIRSLCFSSDSKTIFTGAEDSQIRLHDPNSSNPYIA), 223–263 (GHSS…LDSS), and 266–299 (AHADQTWDLAFSPDSTKLVSVSDDCSIHSYALKQ).

It belongs to the SKI8 family.

This is Superkiller complex protein 8 (skic8) from Dictyostelium discoideum (Social amoeba).